The following is a 568-amino-acid chain: Putative ABC transporter ATP-binding protein CPE1583 (568 aa).

ABC transporter domains are found at residues 7 to 248 (IEFK…GIRE) and 303 to 536 (LEFK…ASLK). ATP-binding positions include 41–48 (GPSGSGKS) and 336–343 (GKNGAGKS).

The protein belongs to the ABC transporter superfamily.

The protein localises to the cell membrane. Probably part of an ABC transporter complex. Responsible for energy coupling to the transport system. The chain is Putative ABC transporter ATP-binding protein CPE1583 from Clostridium perfringens (strain 13 / Type A).